The following is an 802-amino-acid chain: Penicillin G acylase (802 aa).

Residues 1–26 form the signal peptide; sequence MKMKWLISVIILFVFIFPQNLVFAGE. Position 177 (Glu-177) interacts with Ca(2+). The propeptide at 235–265 is spacer peptide; it reads SAVIKASEKVGKERENFVQSSEELGLPLKIG. Ser-266 acts as the Nucleophile in catalysis. Asp-341 serves as a coordination point for Ca(2+).

Belongs to the peptidase S45 family. As to quaternary structure, heterodimer of an alpha subunit and a beta subunit processed from the same precursor. The cofactor is Ca(2+).

The protein resides in the secreted. It carries out the reaction a penicillin + H2O = 6-aminopenicillanate + a carboxylate. This is Penicillin G acylase (pac) from Rhizobium viscosum (Arthrobacter viscosus).